The following is a 275-amino-acid chain: Dermonecrotic toxin LhSicTox-alphaIV2 (275 aa).

H5 is an active-site residue. Mg(2+) is bound by residues E25 and D27. The Nucleophile role is filled by H41. Cystine bridges form between C45–C51 and C47–C192. D85 lines the Mg(2+) pocket.

This sequence belongs to the arthropod phospholipase D family. Class II subfamily. Mg(2+) is required as a cofactor. As to expression, expressed by the venom gland.

It localises to the secreted. It carries out the reaction an N-(acyl)-sphingosylphosphocholine = an N-(acyl)-sphingosyl-1,3-cyclic phosphate + choline. The enzyme catalyses an N-(acyl)-sphingosylphosphoethanolamine = an N-(acyl)-sphingosyl-1,3-cyclic phosphate + ethanolamine. The catalysed reaction is a 1-acyl-sn-glycero-3-phosphocholine = a 1-acyl-sn-glycero-2,3-cyclic phosphate + choline. It catalyses the reaction a 1-acyl-sn-glycero-3-phosphoethanolamine = a 1-acyl-sn-glycero-2,3-cyclic phosphate + ethanolamine. Functionally, dermonecrotic toxins cleave the phosphodiester linkage between the phosphate and headgroup of certain phospholipids (sphingolipid and lysolipid substrates), forming an alcohol (often choline) and a cyclic phosphate. This toxin acts on sphingomyelin (SM). It may also act on ceramide phosphoethanolamine (CPE), lysophosphatidylcholine (LPC) and lysophosphatidylethanolamine (LPE), but not on lysophosphatidylserine (LPS), and lysophosphatidylglycerol (LPG). It acts by transphosphatidylation, releasing exclusively cyclic phosphate products as second products. Induces dermonecrosis, hemolysis, increased vascular permeability, edema, inflammatory response, and platelet aggregation. This chain is Dermonecrotic toxin LhSicTox-alphaIV2, found in Loxosceles hirsuta (Recluse spider).